The following is a 242-amino-acid chain: UDP-2,3-diacylglucosamine hydrolase (242 aa).

Residues Asp7, His9, Asp40, Asn78, and His113 each coordinate Mn(2+). 78 to 79 (NR) contacts substrate. Residues Asp121, Ser159, Thr163, Lys166, and His194 each coordinate substrate. Mn(2+) contacts are provided by His194 and His196.

This sequence belongs to the LpxH family. Mn(2+) serves as cofactor.

The protein localises to the cell inner membrane. The enzyme catalyses UDP-2-N,3-O-bis[(3R)-3-hydroxytetradecanoyl]-alpha-D-glucosamine + H2O = 2-N,3-O-bis[(3R)-3-hydroxytetradecanoyl]-alpha-D-glucosaminyl 1-phosphate + UMP + 2 H(+). Its pathway is glycolipid biosynthesis; lipid IV(A) biosynthesis; lipid IV(A) from (3R)-3-hydroxytetradecanoyl-[acyl-carrier-protein] and UDP-N-acetyl-alpha-D-glucosamine: step 4/6. Functionally, hydrolyzes the pyrophosphate bond of UDP-2,3-diacylglucosamine to yield 2,3-diacylglucosamine 1-phosphate (lipid X) and UMP by catalyzing the attack of water at the alpha-P atom. Involved in the biosynthesis of lipid A, a phosphorylated glycolipid that anchors the lipopolysaccharide to the outer membrane of the cell. The sequence is that of UDP-2,3-diacylglucosamine hydrolase from Ectopseudomonas mendocina (strain ymp) (Pseudomonas mendocina).